A 359-amino-acid chain; its full sequence is Fructose-bisphosphate aldolase class 2 (359 aa).

Serine 62 contributes to the D-glyceraldehyde 3-phosphate binding site. Aspartate 110 serves as the catalytic Proton donor. Zn(2+) contacts are provided by histidine 111, aspartate 145, glutamate 175, and histidine 227. Position 228 (glycine 228) interacts with dihydroxyacetone phosphate. A Zn(2+)-binding site is contributed by histidine 265. Dihydroxyacetone phosphate is bound by residues 266–268 and 287–290; these read GGS and NIDT.

The protein belongs to the class II fructose-bisphosphate aldolase family. Zn(2+) is required as a cofactor.

The catalysed reaction is beta-D-fructose 1,6-bisphosphate = D-glyceraldehyde 3-phosphate + dihydroxyacetone phosphate. It participates in carbohydrate degradation; glycolysis; D-glyceraldehyde 3-phosphate and glycerone phosphate from D-glucose: step 4/4. Catalyzes the aldol condensation of dihydroxyacetone phosphate (DHAP or glycerone-phosphate) with glyceraldehyde 3-phosphate (G3P) to form fructose 1,6-bisphosphate (FBP) in gluconeogenesis and the reverse reaction in glycolysis. This Buchnera aphidicola subsp. Baizongia pistaciae (strain Bp) protein is Fructose-bisphosphate aldolase class 2 (fbaA).